The following is a 414-amino-acid chain: Serine hydroxymethyltransferase (414 aa).

Residues L118 and 122–124 (GHL) each bind (6S)-5,6,7,8-tetrahydrofolate. An N6-(pyridoxal phosphate)lysine modification is found at K227. Residues E240 and 350 to 352 (SPF) each bind (6S)-5,6,7,8-tetrahydrofolate.

Belongs to the SHMT family. In terms of assembly, homodimer. Pyridoxal 5'-phosphate is required as a cofactor.

The protein resides in the cytoplasm. The enzyme catalyses (6R)-5,10-methylene-5,6,7,8-tetrahydrofolate + glycine + H2O = (6S)-5,6,7,8-tetrahydrofolate + L-serine. Its pathway is one-carbon metabolism; tetrahydrofolate interconversion. The protein operates within amino-acid biosynthesis; glycine biosynthesis; glycine from L-serine: step 1/1. In terms of biological role, catalyzes the reversible interconversion of serine and glycine with tetrahydrofolate (THF) serving as the one-carbon carrier. This reaction serves as the major source of one-carbon groups required for the biosynthesis of purines, thymidylate, methionine, and other important biomolecules. Also exhibits THF-independent aldolase activity toward beta-hydroxyamino acids, producing glycine and aldehydes, via a retro-aldol mechanism. This chain is Serine hydroxymethyltransferase, found in Bacillus thuringiensis (strain Al Hakam).